The sequence spans 155 residues: Transcriptional repressor NrdR (155 aa).

Residues 3–34 (CPFCAANDTKVIDSRLVAEGDQVRRRRECVAC) fold into a zinc finger. Positions 49-139 (PRLIKQDGSR…VYRRFQDLNE (91 aa)) constitute an ATP-cone domain.

It belongs to the NrdR family. Requires Zn(2+) as cofactor.

Its function is as follows. Negatively regulates transcription of bacterial ribonucleotide reductase nrd genes and operons by binding to NrdR-boxes. The protein is Transcriptional repressor NrdR of Ectopseudomonas mendocina (strain ymp) (Pseudomonas mendocina).